The chain runs to 293 residues: Ethanolamine ammonia-lyase small subunit (293 aa).

The adenosylcob(III)alamin site is built by Val207 and Glu228.

This sequence belongs to the EutC family. As to quaternary structure, the basic unit is a heterodimer which dimerizes to form tetramers. The heterotetramers trimerize; 6 large subunits form a core ring with 6 small subunits projecting outwards. The cofactor is adenosylcob(III)alamin.

It localises to the bacterial microcompartment. The enzyme catalyses ethanolamine = acetaldehyde + NH4(+). It participates in amine and polyamine degradation; ethanolamine degradation. Functionally, catalyzes the deamination of various vicinal amino-alcohols to oxo compounds. Allows this organism to utilize ethanolamine as the sole source of nitrogen and carbon in the presence of external vitamin B12. The chain is Ethanolamine ammonia-lyase small subunit from Listeria innocua serovar 6a (strain ATCC BAA-680 / CLIP 11262).